Reading from the N-terminus, the 240-residue chain is Manganese transport system ATP-binding protein MntB (240 aa).

The ABC transporter domain maps to 1 to 233; the sequence is MNIQGLTIAY…KIQFAYGDAP (233 aa). 33 to 40 contacts ATP; it reads GPNGAGKS.

The protein belongs to the ABC transporter superfamily.

It is found in the cell membrane. Functionally, this protein is probably a component of a manganese permease, a binding protein-dependent, ATP-driven transport system. Probably responsible for energy coupling to the transport system. In Listeria innocua serovar 6a (strain ATCC BAA-680 / CLIP 11262), this protein is Manganese transport system ATP-binding protein MntB (mntB).